The chain runs to 386 residues: Ovalbumin (386 aa).

Gly-2 carries the post-translational modification N-acetylglycine. A signal peptide (not cleaved) is located at residues His-22–Asp-48. Ser-69 is modified (phosphoserine). Cys-74 and Cys-121 are oxidised to a cystine. Ca(2+) is bound at residue Glu-192. Asn-293 is a glycosylation site (N-linked (GlcNAc...) asparagine). The residue at position 345 (Ser-345) is a Phosphoserine.

It belongs to the serpin family. Ov-serpin subfamily. In terms of assembly, homodimer. Post-translationally, undergoes proteolytic cleavage first at the canonical P1-P1' site, and then at the P8-P7 site by subtilisin. As to expression, major protein of egg white. Expressed in the magnum of the oviduct (at protein level).

The protein localises to the secreted. In terms of biological role, non-inhibitory serpin. Storage protein of egg white. In Gallus gallus (Chicken), this protein is Ovalbumin (SERPINB14).